A 174-amino-acid chain; its full sequence is Cytidylate kinase (174 aa).

Residue 7-15 (GLPGTGTTT) coordinates ATP.

It belongs to the cytidylate kinase family. Type 2 subfamily.

Its subcellular location is the cytoplasm. The catalysed reaction is CMP + ATP = CDP + ADP. The enzyme catalyses dCMP + ATP = dCDP + ADP. The polypeptide is Cytidylate kinase (Methanococcus vannielii (strain ATCC 35089 / DSM 1224 / JCM 13029 / OCM 148 / SB)).